Consider the following 450-residue polypeptide: Divalent metal cation transporter MntH (450 aa).

11 helical membrane-spanning segments follow: residues 34–54 (LSFLGPGLLVAVGYMDPGNWI), 61–81 (AQYGYTLLFVILISSLSAMLL), 108–128 (IAIIFWIIAELAIIATDIAEV), 141–161 (IPLIVGALITVLDVFLLLFIM), 170–190 (AIVGTFIFTVLFIFIFEVYIS), 212–232 (GILYIALGIIGATIMPHNLYL), 263–283 (IQLSIAFVVNCLLLVLGASLF), 305–325 (PVLGATMGAIMSTLFAVALLA), 361–381 (SLAVIPVIVCLIIFKGNAAKI), 383–403 (QLLVFSQVFLSIALPFCLIPL), and 422–442 (VNIISWTLIIILSILNVYLIV).

This sequence belongs to the NRAMP family.

It is found in the cell membrane. In terms of biological role, h(+)-stimulated, divalent metal cation uptake system. This is Divalent metal cation transporter MntH from Staphylococcus aureus (strain Mu3 / ATCC 700698).